Here is a 345-residue protein sequence, read N- to C-terminus: MANHAAKPLALTLGEPAGIGPDITIAGWLRRRELNLPAFYLLGDEALIARRAKTLDKTLGKALGAEIRIASVSAHEAAAAFTEALPVVATGERATAEPGQPDASSAPAALASIRQAVADVRAGRAGAVVTNPIAKSVLYRAGFRHPGHTEFLAELAAKDGRVPQPVMMLWSPRLAVVPVTIHVSLRDALSQLTSELIVSTVRIVATELKSRFGIARPRIAVSGLNPHAGEDGSLGHEEQTIIAPALKTLRNDGIDARGPLPADTMFHEAARSSYDCAVCMYHDQALIPIKTVAFDDAVNVTLGLPFIRTSPDHGTAFDIAGTGKANPASLIAALELASRMAAAKT.

Substrate contacts are provided by histidine 148 and threonine 149. A divalent metal cation-binding residues include histidine 182, histidine 227, and histidine 282. Residues lysine 290, asparagine 299, and arginine 308 each coordinate substrate.

This sequence belongs to the PdxA family. As to quaternary structure, homodimer. Zn(2+) is required as a cofactor. The cofactor is Mg(2+). Requires Co(2+) as cofactor.

The protein localises to the cytoplasm. The enzyme catalyses 4-(phosphooxy)-L-threonine + NAD(+) = 3-amino-2-oxopropyl phosphate + CO2 + NADH. The protein operates within cofactor biosynthesis; pyridoxine 5'-phosphate biosynthesis; pyridoxine 5'-phosphate from D-erythrose 4-phosphate: step 4/5. Its function is as follows. Catalyzes the NAD(P)-dependent oxidation of 4-(phosphooxy)-L-threonine (HTP) into 2-amino-3-oxo-4-(phosphooxy)butyric acid which spontaneously decarboxylates to form 3-amino-2-oxopropyl phosphate (AHAP). The polypeptide is 4-hydroxythreonine-4-phosphate dehydrogenase (Bradyrhizobium diazoefficiens (strain JCM 10833 / BCRC 13528 / IAM 13628 / NBRC 14792 / USDA 110)).